We begin with the raw amino-acid sequence, 702 residues long: 1,4-alpha-glucan-branching enzyme (702 aa).

Alanine 2 carries the post-translational modification N-acetylalanine. Residues 62-63 and 91-93 each bind substrate; these read NE and WAP. Tryptophan 107 lines the (1,4-alpha-D-glucosyl)n pocket. Position 118 to 121 (118 to 121) interacts with substrate; sequence DYGK. Lysine 143 serves as a coordination point for (1,4-alpha-D-glucosyl)n. Tyrosine 173 is modified (phosphotyrosine). 333-336 provides a ligand contact to substrate; sequence EILR. Aspartate 357 functions as the Nucleophile in the catalytic mechanism. Glutamate 412 acts as the Proton donor in catalysis.

This sequence belongs to the glycosyl hydrolase 13 family. GlgB subfamily. In terms of assembly, monomer.

The enzyme catalyses Transfers a segment of a (1-&gt;4)-alpha-D-glucan chain to a primary hydroxy group in a similar glucan chain.. The protein operates within glycan biosynthesis; glycogen biosynthesis. In terms of biological role, glycogen-branching enzyme participates in the glycogen biosynthetic process along with glycogenin and glycogen synthase. Generates alpha-1,6-glucosidic branches from alpha-1,4-linked glucose chains, to increase solubility of the glycogen polymer. The chain is 1,4-alpha-glucan-branching enzyme (GBE1) from Homo sapiens (Human).